The following is a 77-amino-acid chain: Translation initiation factor IF-1, chloroplastic (77 aa).

Residues 1–71 (MKEQKLIHEG…TRGRIIYRLR (71 aa)) enclose the S1-like domain.

It belongs to the IF-1 family. Component of the 30S ribosomal translation pre-initiation complex which assembles on the 30S ribosome in the order IF-2 and IF-3, IF-1 and N-formylmethionyl-tRNA(fMet); mRNA recruitment can occur at any time during PIC assembly.

The protein localises to the plastid. It localises to the chloroplast. Its function is as follows. One of the essential components for the initiation of protein synthesis. Stabilizes the binding of IF-2 and IF-3 on the 30S subunit to which N-formylmethionyl-tRNA(fMet) subsequently binds. Helps modulate mRNA selection, yielding the 30S pre-initiation complex (PIC). Upon addition of the 50S ribosomal subunit IF-1, IF-2 and IF-3 are released leaving the mature 70S translation initiation complex. This chain is Translation initiation factor IF-1, chloroplastic, found in Acorus calamus var. americanus (American sweet flag).